Reading from the N-terminus, the 213-residue chain is Peptidyl-prolyl cis-trans isomerase B (213 aa).

The N-terminal stretch at 1 to 23 (MAVLRVLCGLLLVSILFLGFVLS) is a signal peptide. The PPIase cyclophilin-type domain maps to 35-197 (FFDIEVDEQP…KSVKIANCGH (163 aa)). A Prevents secretion from ER motif is present at residues 210–213 (DAAE).

It belongs to the cyclophilin-type PPIase family. PPIase B subfamily.

Its subcellular location is the endoplasmic reticulum lumen. It carries out the reaction [protein]-peptidylproline (omega=180) = [protein]-peptidylproline (omega=0). With respect to regulation, inhibited by cyclosporin A (CsA). In terms of biological role, PPIases accelerate the folding of proteins. It catalyzes the cis-trans isomerization of proline imidic peptide bonds in oligopeptides. This chain is Peptidyl-prolyl cis-trans isomerase B, found in Schistosoma japonicum (Blood fluke).